The primary structure comprises 248 residues: Tyrosine recombinase XerD-like (248 aa).

The Core-binding (CB) domain occupies 1 to 72 (MKSYIEPFIA…TANQFLYYLY (72 aa)). The 164-residue stretch at 85-248 (DTMKVMRTEK…PVTLEKYYKS (164 aa)) folds into the Tyr recombinase domain. Catalysis depends on residues Lys-149 and Arg-213. Catalysis depends on Tyr-245, which acts as the O-(3'-phospho-DNA)-tyrosine intermediate.

Belongs to the 'phage' integrase family. XerD-like subfamily.

Its subcellular location is the cytoplasm. Putative tyrosine recombinase. Not involved in the cutting and rejoining of the recombining DNA molecules on dif(SL) site. This chain is Tyrosine recombinase XerD-like, found in Streptococcus pyogenes serotype M28 (strain MGAS6180).